The sequence spans 353 residues: Terpene synthase 1 (353 aa).

The DDxx(x)D/E motif signature appears at 81–86 (DDAIDA). An NDxxSxxxD/E motif motif is present at residues 222–230 (NDLVSYEKE).

This sequence belongs to the terpene synthase family.

It carries out the reaction (2E,6E)-farnesyl diphosphate = (2S,3R,6S,9S)-(-)-protoillud-7-ene + diphosphate. In terms of biological role, terpene synthase that converts its substrate farnesyl diphosphate (FPP) into the sesquiterpene protoillud-7-ene. The chain is Terpene synthase 1 from Tieghemostelium lacteum (Slime mold).